A 214-amino-acid chain; its full sequence is Large ribosomal subunit protein uL16 (214 aa).

Arginine 32 carries the citrulline modification. Lysine 175 participates in a covalent cross-link: Glycyl lysine isopeptide (Lys-Gly) (interchain with G-Cter in SUMO2). Lysine 188 participates in a covalent cross-link: Glycyl lysine isopeptide (Lys-Gly) (interchain with G-Cter in ubiquitin).

It belongs to the universal ribosomal protein uL16 family. Component of the large ribosomal subunit. Mature ribosomes consist of a small (40S) and a large (60S) subunit. The 40S subunit contains about 33 different proteins and 1 molecule of RNA (18S). The 60S subunit contains about 49 different proteins and 3 molecules of RNA (28S, 5.8S and 5S). In terms of processing, citrullinated by PADI4. Ufmylated by UFL1.

The protein localises to the cytoplasm. Component of the large ribosomal subunit. Plays a role in the formation of actively translating ribosomes. May play a role in the embryonic brain development. The sequence is that of Large ribosomal subunit protein uL16 (RPL10) from Oryctolagus cuniculus (Rabbit).